Reading from the N-terminus, the 146-residue chain is Lysozyme C (146 aa).

Residues 1–16 (SGKYISWEDSCSYLQL) form the signal peptide. The 130-residue stretch at 17–146 (QKYERCELAK…LSQWTQGCKL (130 aa)) folds into the C-type lysozyme domain. 4 disulfides stabilise this stretch: cysteine 22–cysteine 144, cysteine 46–cysteine 132, cysteine 81–cysteine 97, and cysteine 93–cysteine 111. Residues glutamate 51 and aspartate 69 contribute to the active site.

Belongs to the glycosyl hydrolase 22 family. In terms of tissue distribution, expressed by the skin glands.

It localises to the secreted. It carries out the reaction Hydrolysis of (1-&gt;4)-beta-linkages between N-acetylmuramic acid and N-acetyl-D-glucosamine residues in a peptidoglycan and between N-acetyl-D-glucosamine residues in chitodextrins.. Lysozymes have primarily a bacteriolytic function; those in tissues and body fluids are associated with the monocyte-macrophage system and enhance the activity of immunoagents. Has antibacterial activity against the Gram-positive bacterium S.aureus and against the Gram-negative bacterium E.coli with a MIC of 1 uM and 8 uM respectively. No antifungal activity against C.albicans. This is Lysozyme C from Bufo gargarizans andrewsi (Andrew's toad).